A 439-amino-acid chain; its full sequence is Kinesin-like protein KIN-13 (439 aa).

Position 1-5 (1-5) interacts with ATP; the sequence is GSGKS. Residues 1-240 form the Kinesin motor domain; sequence GSGKSFTMMH…LRYADRVKEL (240 aa).

It belongs to the TRAFAC class myosin-kinesin ATPase superfamily. Kinesin family. KIN-13 subfamily. In terms of assembly, interacts with PLK. Post-translationally, phosphorylated by PLK.

It localises to the cytoplasm. Its subcellular location is the cytoskeleton. The protein localises to the cell projection. It is found in the cilium. The protein resides in the flagellum. It localises to the flagellum basal body. Its subcellular location is the flagellum axoneme. The protein localises to the spindle. It is found in the chromosome. The protein resides in the centromere. It localises to the kinetochore. In terms of biological role, involved in cell cycle. Involved in formation of flagella, regulation of flagellar length, and formation of median bodies during interphase. Regulates flagellar length in all eight distal flagellar tips by promoting disassembly of the microtubules. Disassembles microtubules at the distal flagellar tips in a length-dependent manner in order to maintain different equilibrium lengths of the four flagellar pairs. Regulates interphase and mitotic microtubule dynamics. Regulates microtubule disassembly dynamics of the dual mitotic spindles and the median body. This is Kinesin-like protein KIN-13 from Giardia intestinalis (Giardia lamblia).